Here is a 3149-residue protein sequence, read N- to C-terminus: Large tegument protein deneddylase (3149 aa).

A compositionally biased stretch (polar residues) spans 1–13; it reads MSNGDWGQSQRTR. Positions 1-30 are disordered; sequence MSNGDWGQSQRTRGTGPVRGIRTMDVNAPG. Positions 1–268 are deubiquitination activity; that stretch reads MSNGDWGQSQ…YEANGSGFDL (268 aa). The Peptidase C76 domain maps to 41 to 258; that stretch reads LGTASCNQAH…MLEHYGVYDF (218 aa). Catalysis depends on residues cysteine 61, aspartate 193, and histidine 195. Residues 319–341 form a disordered region; sequence PAARYSPAKTNSPPSSPASAAPA. 8 consecutive repeat copies span residues 335–339, 340–344, 345–349, 350–354, 355–359, 360–364, 365–369, and 370–374. The 8 X 5 AA repeats of P-A-S-A-A stretch occupies residues 335–374; that stretch reads PASAAPASAAPASAAPASAAPASAAPASAAPASAAPASAA. Disordered regions lie at residues 382-656, 901-923, 1143-1166, 1412-1434, 1644-1677, 2583-2839, 2852-2981, and 2995-3019; these read FIPI…GSGL, LLSG…SIYR, APIS…TPPL, GRKE…RARE, PEAT…SALW, GLVS…PTAV, AAAS…PGAR, and QTYT…KCKD. The span at 462 to 483 shows a compositional bias: pro residues; that stretch reads LPPPVIPIPHQSPPASPTPHPA. Low complexity-rich tracts occupy residues 509–536 and 544–564; these read AAPS…TTTL and QPPQ…QPTP. The interaction with inner tegument protein stretch occupies residues 554 to 584; sequence SPLLPQQQPTPSAAPAPSPLLPQQQPPPSAA. Pro residues predominate over residues 565–609; that stretch reads SAAPAPSPLLPQQQPPPSAARAPSPLPPQQQPLPSATPAPPPAQQ. The span at 1143–1155 shows a compositional bias: low complexity; the sequence is APISPASPSATPA. Over residues 2592–2603 the composition is skewed to polar residues; the sequence is SADNTPASSDRL. A compositionally biased stretch (pro residues) spans 2711-2720; the sequence is QPAPQQPPSS. 2 stretches are compositionally biased toward polar residues: residues 2734–2745 and 2784–2804; these read SPHSTPSTASGS and SAAS…SSQD. Over residues 2812–2827 the composition is skewed to basic and acidic residues; that stretch reads MQREKKQQGGREEAAE. Residues 2874–2885 are compositionally biased toward low complexity; it reads APALGSGLAAPA.

This sequence belongs to the herpesviridae large tegument protein family. As to quaternary structure, interacts with host CUL1 and CUL4A; these interactions inhibit the E3 ligase activity of cullins. Interacts with inner tegument protein. Interacts with capsid vertex specific component CVC2. Interacts with the major capsid protein/MCP. Interacts with host TRIM25 and YWHAZ.

The protein localises to the virion tegument. The protein resides in the host cytoplasm. It is found in the host nucleus. It carries out the reaction Thiol-dependent hydrolysis of ester, thioester, amide, peptide and isopeptide bonds formed by the C-terminal Gly of ubiquitin (a 76-residue protein attached to proteins as an intracellular targeting signal).. In terms of biological role, large tegument protein that plays multiple roles in the viral cycle. During viral entry, remains associated with the capsid while most of the tegument is detached and participates in the capsid transport toward the host nucleus. Plays a role in the routing of the capsid at the nuclear pore complex and subsequent uncoating. Within the host nucleus, acts as a deneddylase and promotes the degradation of nuclear CRLs (cullin-RING ubiquitin ligases) and thereby stabilizes nuclear CRL substrates, while cytoplasmic CRLs remain unaffected. These modifications prevent host cell cycle S-phase progression and create a favorable environment allowing efficient viral genome replication. Participates later in the secondary envelopment of capsids. Indeed, plays a linker role for the association of the outer viral tegument to the capsids together with the inner tegument protein. Counteracts host TLR-mediated NF-kappa-B activation through both MYD88 and TICAM1-dependent pathways by interfering with 'Lys-63'- and 'Lys-48'-linked ubiquitination of signaling intermediates such as TRAF6 and IKBKG. Inhibits type I interferon production by forming a tri-molecular complex with host TRIM25 and 14-3-3 thereby promoting TRIM25 autoubiquitination and sequestration of the ligase into inactive protein aggregates. In turn, host RIGI is recruited to the complex but ubiquitination is severely impaired leading to inhibition of the pathway. Also catalyzes the removal of 'Lys-48'- and 'Lys-63'-linked ubiquitin chains on host TBK1 and STING1 suppressing cGAS-STING signaling in addition to the RIGI-MAVS pathway. Inhibits selective autophagy by deubiquitinating host SQSTM1. In turn, decreased SQSTM1 ubiquitination fails to recruit LC3 to SQSTM1-positive aggregates. In the host nucleus, deubiquitinates topoisomerase II subunits TOP2A and TOP2B thereby stabilizing SUMOylated TOP2 which halts the DNA damage response to TOP2-induced double strand DNA breaks and promotes cell survival. The polypeptide is Large tegument protein deneddylase (Epstein-Barr virus (strain B95-8) (HHV-4)).